Consider the following 269-residue polypeptide: Protein NETWORKED 3A (269 aa).

The NAB domain maps to 6–87 (SKWWWIGNHN…ERYDLLRPSS (82 aa)). The interval 87 to 113 (SVHKHGSDSESHEKSSTCDESSWSEAC) is disordered. Residues 91 to 103 (HGSDSESHEKSST) are compositionally biased toward basic and acidic residues. The stretch at 155-214 (NGNSEMMKIEIERLREENKVYSEMVREKDEEKREAIRQMSVAIQMLKEENSELKKRVTNT) forms a coiled coil.

This sequence belongs to the NET family.

Its subcellular location is the cytoplasm. It is found in the cytoskeleton. It localises to the nucleus membrane. In terms of biological role, plant-specific actin binding protein. May be part of a membrane-cytoskeletal adapter complex. The chain is Protein NETWORKED 3A from Arabidopsis thaliana (Mouse-ear cress).